Reading from the N-terminus, the 453-residue chain is Alpha-glucosidase (453 aa).

T3–D69 lines the NAD(+) pocket. N149 contacts substrate. C171 serves as a coordination point for Mn(2+). H172 acts as the Proton donor in catalysis. Residue H201 participates in Mn(2+) binding.

As to quaternary structure, homotetramer. Requires Mn(2+) as cofactor. It depends on Co(2+) as a cofactor. Ca(2+) is required as a cofactor. Fe(2+) serves as cofactor. The cofactor is Mg(2+). Requires Sr(2+) as cofactor. It depends on Ni(2+) as a cofactor. NAD(+) is required as a cofactor.

It catalyses the reaction Hydrolysis of terminal, non-reducing (1-&gt;4)-linked alpha-D-glucose residues with release of alpha-D-glucose.. It participates in glycan degradation; palatinose degradation. Is inhibited by EDTA in vitro. Alpha-glucosidase with broad specificity. Hydrolyzes maltose, palatinose, maltulose, trehalose, trehalulose, turanose, leucrose, sucrose and maltitol. Is not active against alpha-galactosides, e.g. melibiose, and alpha-mannosides. Shows an obligate requirement for an O-alpha-glycosidic linkage, since it is not able to cleave beta-glycosidic bonds (cellobiose, gentiobiose, lactose, sophorose or laminaribiose). Cannot hydrolyze phosphorylated alpha-glucosides derivatives. Seems to be involved in the degradation of palatinose, a sucrose isomer that is formed as a reserve material under conditions of excess carbon availability, sequestered in a form unavailable to competitors such as fungi or the host plant, and whose consumption appears to be postponed until the preferentially metabolized carbon source (e.g. sucrose) is depleted. The chain is Alpha-glucosidase (palH) from Erwinia rhapontici (Pectobacterium rhapontici).